The sequence spans 93 residues: RNA-binding protein Hfq (93 aa).

One can recognise a Sm domain in the interval 9–68 (DPFLNALRRERVPVSIYLVNGIKLQGQVESFDQFVILLKNTVSQMVYKHAISTVVPARPF). Residues 70–93 (VNSHTAAPSPAGGFNGQQDDNNDQ) form a disordered region.

Belongs to the Hfq family. Homohexamer.

In terms of biological role, RNA chaperone that binds small regulatory RNA (sRNAs) and mRNAs to facilitate mRNA translational regulation in response to envelope stress, environmental stress and changes in metabolite concentrations. Also binds with high specificity to tRNAs. The polypeptide is RNA-binding protein Hfq (Shewanella sediminis (strain HAW-EB3)).